The sequence spans 380 residues: Queuine tRNA-ribosyltransferase (380 aa).

The active-site Proton acceptor is aspartate 96. Substrate-binding positions include 96 to 100 (DSGGF), aspartate 150, glutamine 193, and glycine 220. The tract at residues 251–257 (GVGAPDS) is RNA binding. Aspartate 270 serves as the catalytic Nucleophile. The segment at 275–279 (TRIAR) is RNA binding; important for wobble base 34 recognition. Zn(2+) contacts are provided by cysteine 308, cysteine 310, cysteine 313, and histidine 339.

The protein belongs to the queuine tRNA-ribosyltransferase family. In terms of assembly, homodimer. Within each dimer, one monomer is responsible for RNA recognition and catalysis, while the other monomer binds to the replacement base PreQ1. It depends on Zn(2+) as a cofactor.

The catalysed reaction is 7-aminomethyl-7-carbaguanine + guanosine(34) in tRNA = 7-aminomethyl-7-carbaguanosine(34) in tRNA + guanine. The protein operates within tRNA modification; tRNA-queuosine biosynthesis. Catalyzes the base-exchange of a guanine (G) residue with the queuine precursor 7-aminomethyl-7-deazaguanine (PreQ1) at position 34 (anticodon wobble position) in tRNAs with GU(N) anticodons (tRNA-Asp, -Asn, -His and -Tyr). Catalysis occurs through a double-displacement mechanism. The nucleophile active site attacks the C1' of nucleotide 34 to detach the guanine base from the RNA, forming a covalent enzyme-RNA intermediate. The proton acceptor active site deprotonates the incoming PreQ1, allowing a nucleophilic attack on the C1' of the ribose to form the product. After dissociation, two additional enzymatic reactions on the tRNA convert PreQ1 to queuine (Q), resulting in the hypermodified nucleoside queuosine (7-(((4,5-cis-dihydroxy-2-cyclopenten-1-yl)amino)methyl)-7-deazaguanosine). This chain is Queuine tRNA-ribosyltransferase, found in Streptococcus agalactiae serotype Ia (strain ATCC 27591 / A909 / CDC SS700).